The chain runs to 473 residues: Trehalose-6-phosphate synthase (473 aa).

Arg10 serves as a coordination point for D-glucose 6-phosphate. Residue 21-22 coordinates UDP-alpha-D-glucose; the sequence is GG. D-glucose 6-phosphate-binding residues include Tyr76 and Asp130. The UDP-alpha-D-glucose site is built by Arg262 and Lys267. D-glucose 6-phosphate is bound at residue Arg300. UDP-alpha-D-glucose contacts are provided by residues Phe339 and 365–369; that span reads LVAKE.

The protein belongs to the glycosyltransferase 20 family. Homotetramer.

It catalyses the reaction D-glucose 6-phosphate + UDP-alpha-D-glucose = alpha,alpha-trehalose 6-phosphate + UDP + H(+). The protein operates within glycan biosynthesis; trehalose biosynthesis. In terms of biological role, probably involved in the osmoprotection via the biosynthesis of trehalose. Catalyzes the transfer of glucose from UDP-alpha-D-glucose (UDP-Glc) to D-glucose 6-phosphate (Glc-6-P) to form trehalose-6-phosphate. Acts with retention of the anomeric configuration of the UDP-sugar donor. In Salmonella arizonae (strain ATCC BAA-731 / CDC346-86 / RSK2980), this protein is Trehalose-6-phosphate synthase (otsA).